A 295-amino-acid polypeptide reads, in one-letter code: UDP-N-acetylenolpyruvoylglucosamine reductase (295 aa).

One can recognise an FAD-binding PCMH-type domain in the interval 24 to 188; it reads KVGGDAEIFF…LKAVFKVNKG (165 aa). Residue R168 is part of the active site. S217 (proton donor) is an active-site residue. The active site involves E287.

This sequence belongs to the MurB family. FAD serves as cofactor.

It is found in the cytoplasm. It carries out the reaction UDP-N-acetyl-alpha-D-muramate + NADP(+) = UDP-N-acetyl-3-O-(1-carboxyvinyl)-alpha-D-glucosamine + NADPH + H(+). Its pathway is cell wall biogenesis; peptidoglycan biosynthesis. Functionally, cell wall formation. The protein is UDP-N-acetylenolpyruvoylglucosamine reductase of Rickettsia akari (strain Hartford).